A 78-amino-acid polypeptide reads, in one-letter code: Acyl carrier protein (78 aa).

A Carrier domain is found at 2 to 77; that stretch reads SDIAERVKKI…DAIKFLEKNS (76 aa). At S37 the chain carries O-(pantetheine 4'-phosphoryl)serine.

It belongs to the acyl carrier protein (ACP) family. Post-translationally, 4'-phosphopantetheine is transferred from CoA to a specific serine of apo-ACP by AcpS. This modification is essential for activity because fatty acids are bound in thioester linkage to the sulfhydryl of the prosthetic group.

Its subcellular location is the cytoplasm. Its pathway is lipid metabolism; fatty acid biosynthesis. Its function is as follows. Carrier of the growing fatty acid chain in fatty acid biosynthesis. The sequence is that of Acyl carrier protein from Methylorubrum extorquens (strain CM4 / NCIMB 13688) (Methylobacterium extorquens).